Consider the following 135-residue polypeptide: uncharacterized protein (135 aa).

A run of 3 helical transmembrane segments spans residues 13–35, 82–101, and 108–130; these read AKVI…AMYL, VAVF…LLSI, and IYRI…PLIL.

It is found in the cell membrane. This is an uncharacterized protein from Archaeoglobus fulgidus (strain ATCC 49558 / DSM 4304 / JCM 9628 / NBRC 100126 / VC-16).